The chain runs to 396 residues: Activity-regulated cytoskeleton-associated protein (396 aa).

The stretch at 54 to 78 forms a coiled coil; it reads SKQVERELKGLHRSVGKLESNLDGY. The interval 89–100 is interaction with SH3GL1 or SH3GL3; the sequence is KSIKACLCRCQE. The interaction with DNM2 stretch occupies residues 195–214; sequence QPWVPGEDGQPSPGVDTQIF. The residue at position 260 (Ser-260) is a Phosphoserine. Glycyl lysine isopeptide (Lys-Gly) (interchain with G-Cter in ubiquitin) cross-links involve residues Lys-268 and Lys-269. Thr-278 is subject to Phosphothreonine. The tract at residues 356-396 is disordered; that stretch reads QDDLEQAAEPAGPHLPVEDEAETLTPAPNSESVASDRTQPE. Polar residues predominate over residues 381–396; sequence PAPNSESVASDRTQPE.

Belongs to the ARC/ARG3.1 family. As to quaternary structure, homooligomer; homooligomerizes into virion-like capsids. Interacts with SH3GL1/endophilin-2, SH3GL3/endophilin-3 and DNM2/DYN2. Interacts with CAMK2B (in the kinase inactive state); leading to target ARC to inactive synapses. Interacts with PSEN1. Post-translationally, palmitoylation anchors the protein into the membrane by allowing direct insertion into the hydrophobic core of the lipid bilayer. In terms of processing, ubiquitinated by UBE3A, leading to its degradation by the proteasome, thereby promoting AMPA receptors (AMPARs) expression at synapses. Ubiquitinated by RNF216 at Lys-268 and Lys-269 limiting ARC protein levels induced by synaptic activity and thus regulating ARC-dependent forms of synaptic plasticity. Phosphorylation at Ser-260 by CaMK2 prevents homooligomerization into virion-like capsids by disrupting an interaction surface essential for high-order oligomerization. Phosphorylation by CaMK2 inhibits synaptic activity.

It localises to the extracellular vesicle membrane. Its subcellular location is the postsynaptic cell membrane. The protein localises to the synapse. It is found in the postsynaptic density. The protein resides in the early endosome membrane. It localises to the cell projection. Its subcellular location is the dendrite. The protein localises to the cytoplasm. It is found in the cytoskeleton. The protein resides in the cell cortex. It localises to the dendritic spine. Its subcellular location is the cytoplasmic vesicle. The protein localises to the secretory vesicle. It is found in the acrosome. The protein resides in the clathrin-coated vesicle membrane. Functionally, master regulator of synaptic plasticity that self-assembles into virion-like capsids that encapsulate RNAs and mediate intercellular RNA transfer in the nervous system. ARC protein is released from neurons in extracellular vesicles that mediate the transfer of ARC mRNA into new target cells, where ARC mRNA can undergo activity-dependent translation. ARC capsids are endocytosed and are able to transfer ARC mRNA into the cytoplasm of neurons. Acts as a key regulator of synaptic plasticity: required for protein synthesis-dependent forms of long-term potentiation (LTP) and depression (LTD) and for the formation of long-term memory. Regulates synaptic plasticity by promoting endocytosis of AMPA receptors (AMPARs) in response to synaptic activity: this endocytic pathway maintains levels of surface AMPARs in response to chronic changes in neuronal activity through synaptic scaling, thereby contributing to neuronal homeostasis. Acts as a postsynaptic mediator of activity-dependent synapse elimination in the developing cerebellum by mediating elimination of surplus climbing fiber synapses. Accumulates at weaker synapses, probably to prevent their undesired enhancement. This suggests that ARC-containing virion-like capsids may be required to eliminate synaptic material. Required to transduce experience into long-lasting changes in visual cortex plasticity and for long-term memory. Involved in postsynaptic trafficking and processing of amyloid-beta A4 (APP) via interaction with PSEN1. In addition to its role in synapses, also involved in the regulation of the immune system: specifically expressed in skin-migratory dendritic cells and regulates fast dendritic cell migration, thereby regulating T-cell activation. The protein is Activity-regulated cytoskeleton-associated protein of Homo sapiens (Human).